Consider the following 1072-residue polypeptide: DNA-directed RNA polymerase subunit beta (1072 aa).

It belongs to the RNA polymerase beta chain family. In terms of assembly, in plastids the minimal PEP RNA polymerase catalytic core is composed of four subunits: alpha, beta, beta', and beta''. When a (nuclear-encoded) sigma factor is associated with the core the holoenzyme is formed, which can initiate transcription.

Its subcellular location is the plastid. The protein resides in the chloroplast. It catalyses the reaction RNA(n) + a ribonucleoside 5'-triphosphate = RNA(n+1) + diphosphate. Its function is as follows. DNA-dependent RNA polymerase catalyzes the transcription of DNA into RNA using the four ribonucleoside triphosphates as substrates. In Capsella bursa-pastoris (Shepherd's purse), this protein is DNA-directed RNA polymerase subunit beta.